The following is a 366-amino-acid chain: Chorismate synthase (366 aa).

2 residues coordinate NADP(+): Arg-48 and Arg-54. Residues 125–127, 238–239, Gly-278, 293–297, and Arg-319 contribute to the FMN site; these read RSS, NA, and KPTSS.

This sequence belongs to the chorismate synthase family. As to quaternary structure, homotetramer. FMNH2 is required as a cofactor.

It carries out the reaction 5-O-(1-carboxyvinyl)-3-phosphoshikimate = chorismate + phosphate. It functions in the pathway metabolic intermediate biosynthesis; chorismate biosynthesis; chorismate from D-erythrose 4-phosphate and phosphoenolpyruvate: step 7/7. Its function is as follows. Catalyzes the anti-1,4-elimination of the C-3 phosphate and the C-6 proR hydrogen from 5-enolpyruvylshikimate-3-phosphate (EPSP) to yield chorismate, which is the branch point compound that serves as the starting substrate for the three terminal pathways of aromatic amino acid biosynthesis. This reaction introduces a second double bond into the aromatic ring system. The protein is Chorismate synthase of Dechloromonas aromatica (strain RCB).